A 292-amino-acid polypeptide reads, in one-letter code: MNNHFKCIGIVGHPRHPTALTTHEMLYRWLCAKGYEVIVEQQIAHELQLKNVKTGTLAEIGQLADLAVVVGGDGNMLGAARTLARYDIKVIGINRGNLGFLTDLDPDNAQQQLADVLEGHYISEKRFLLEAQVCQQDCQKRISTAINEVVLHPGKVAHMIEFEVYIDEIFAFSQRSDGLIISTPTGSTAYSLSAGGPILTPSLDAITLVPMFPHTLSARPLVINSSSTIRLRFSHRRNDLEISCDSQIALPIQEGEDVLIRRCDYHLNLIHPKDYSYFNTLSTKLGWSKKLF.

The Proton acceptor role is filled by Asp-73. NAD(+)-binding positions include Asp-73–Gly-74, Asn-147–Glu-148, His-158, Arg-175, Asp-177, Thr-188–Ser-193, and Gln-247.

This sequence belongs to the NAD kinase family. It depends on a divalent metal cation as a cofactor.

The protein localises to the cytoplasm. The enzyme catalyses NAD(+) + ATP = ADP + NADP(+) + H(+). Functionally, involved in the regulation of the intracellular balance of NAD and NADP, and is a key enzyme in the biosynthesis of NADP. Catalyzes specifically the phosphorylation on 2'-hydroxyl of the adenosine moiety of NAD to yield NADP. The chain is NAD kinase from Escherichia coli (strain SMS-3-5 / SECEC).